The sequence spans 748 residues: 5-methyltetrahydropteroyltriglutamate--homocysteine methyltransferase (748 aa).

5-methyltetrahydropteroyltri-L-glutamate contacts are provided by residues 18-21 (REWK) and K112. L-homocysteine-binding positions include 420–422 (IGS) and E473. L-methionine contacts are provided by residues 420–422 (IGS) and E473. W550 provides a ligand contact to 5-methyltetrahydropteroyltri-L-glutamate. Residue D588 participates in L-homocysteine binding. Residue D588 participates in L-methionine binding. Residue E594 coordinates 5-methyltetrahydropteroyltri-L-glutamate. 3 residues coordinate Zn(2+): H630, C632, and E654. Catalysis depends on H683, which acts as the Proton donor. C715 contacts Zn(2+).

Belongs to the vitamin-B12 independent methionine synthase family. Requires Zn(2+) as cofactor.

The enzyme catalyses 5-methyltetrahydropteroyltri-L-glutamate + L-homocysteine = tetrahydropteroyltri-L-glutamate + L-methionine. It participates in amino-acid biosynthesis; L-methionine biosynthesis via de novo pathway; L-methionine from L-homocysteine (MetE route): step 1/1. Functionally, catalyzes the transfer of a methyl group from 5-methyltetrahydrofolate to homocysteine resulting in methionine formation. The chain is 5-methyltetrahydropteroyltriglutamate--homocysteine methyltransferase from Staphylococcus epidermidis (strain ATCC 35984 / DSM 28319 / BCRC 17069 / CCUG 31568 / BM 3577 / RP62A).